Consider the following 280-residue polypeptide: Eukaryotic translation initiation factor 3 subunit F-1 (280 aa).

Residues 8 to 138 enclose the MPN domain; it reads VRVHPVVLFQ…LRAYVCIQLG (131 aa).

Belongs to the eIF-3 subunit F family. In terms of assembly, component of the eukaryotic translation initiation factor 3 (eIF-3) complex. The eIF-3 complex interacts with pix.

Its subcellular location is the cytoplasm. Its function is as follows. Component of the eukaryotic translation initiation factor 3 (eIF-3) complex, which is involved in protein synthesis of a specialized repertoire of mRNAs and, together with other initiation factors, stimulates binding of mRNA and methionyl-tRNAi to the 40S ribosome. The eIF-3 complex specifically targets and initiates translation of a subset of mRNAs involved in cell proliferation. The protein is Eukaryotic translation initiation factor 3 subunit F-1 of Drosophila erecta (Fruit fly).